A 240-amino-acid polypeptide reads, in one-letter code: Oxygen-insensitive NADPH nitroreductase (240 aa).

Residues 11-15 (HRSIR), S39, Q67, 128-131 (YIGG), and 167-169 (KPR) each bind FMN.

Belongs to the flavin oxidoreductase frp family. Homodimer. The cofactor is FMN.

Its function is as follows. Catalyzes the reduction of nitroaromatic compounds using NADPH. Has a broad electron acceptor specificity. Reduces nitrofurazone by a ping-pong bi-bi mechanism possibly to generate a two-electron transfer product. Major oxygen-insensitive nitroreductase in E.coli. The chain is Oxygen-insensitive NADPH nitroreductase (nfsA) from Escherichia coli (strain K12).